Consider the following 499-residue polypeptide: Lysine--tRNA ligase (499 aa).

2 residues coordinate Mg(2+): Glu-408 and Glu-415.

Belongs to the class-II aminoacyl-tRNA synthetase family. In terms of assembly, homodimer. Requires Mg(2+) as cofactor.

Its subcellular location is the cytoplasm. The enzyme catalyses tRNA(Lys) + L-lysine + ATP = L-lysyl-tRNA(Lys) + AMP + diphosphate. In Bacillus cereus (strain B4264), this protein is Lysine--tRNA ligase.